The chain runs to 1447 residues: MENGNKALSIEQMYQKKSQLEHILLRPDSYIGSVEFTKELMWVYDNSQNRMVQKEISFVPGLYKIFDEILVNAADNKQRDKSMNTIKIDIDPERNMVSVWNNGQGIPVTMHKEQKMYVPTMIFGHLLTSSNYNDDEKKVTGGRNGYGAKLCNIFSTSFTVETATREYKKSFKQTWGNNMGKASDVQIKDFNGTDYTRITFSPDLAKFKMDRLDEDIVALMSRRAYDVAASSKGVSVFLNGNKLGVRNFKDYIDLHIKNTDDDSGPPIKIVHEVANERWEVACCPSDRGFQQVSFVNSIATYKGGRHVDHVVDNLIKQLLEVLKKKNKGGINIKPFQVRNHLWVFVNCLIENPTFDSQTKENMTLQQKGFGSKCTLSEKFINNMSKSGIVESVLAWAKFKAQNDIAKTGGRKSSKIKGIPKLEDANEAGGKNSIKCTLILTEGDSAKSLAVSGLGVIGRDLYGVFPLRGKLLNVREANFKQLSENAEINNLCKIIGLQYKKKYLTEDDLKTLRYGKVMIMTDQDQDGSHIKGLLINFIHTNWPELLRLPFLEEFITPIVKATKKNEELSFYSLPEFEEWKNDTANHHTYNIKYYKGLGTSTSKEAKEYFQDMDRHRILFKYDGSVDDESIVMAFSKKHIESRKVWLTNHMDEVKRRKELGLPERYLYTKGTKSITYADFINLELVLFSNADNERSIPSLVDGLKPGQRKVMFTCFKRNDKREVKVAQLSGSVAEMSAYHHGEVSLQMTIVNLAQNFVGANNINLLEPRGQFGTRLSGGKDCASARYIFTIMSPLTRLIYHPLDDPLLDYQVDDGQKIEPLWYLPIIPMVLVNGAEGIGTGWSTKISNYNPREIMKNLRKMINGQEPSVMHPWYKNFLGRMEYVSDGRYIQTGNIQILSGNRLEISELPVGVWTQNYKENVLEPLSNGTEKVKGIISEYREYHTDTTVRFVISFAPGEFERIHAEEGGFYRVFKLTTTLSTNQMHAFDQNNCLRRFPTAIDILKEYYKLRREYYARRRDFLVGQLTAQADRLSDQARFILEKCEKKLVVENKQRKAMCDELLKRGYRPDPVKEWQRRIKMEDAEQADEEDEEEEEAAPSVSSKAKKEKEVDPEKAFKKLTDVKKFDYLLGMSMWMLTEEKKNELLKQRDTKLSELESLRKKTPEMLWLDDLDALESKLNEVEEKERAEEQGINLKTAKALKGQKSASAKGRKVKSMGGGAGAGDVFPDPDGEPVEFKITEEIIKKMAAAAKVAQAAKEPKKPKEPKEPKVKKEPKGKQIKAEPDASGDEVDEFDAMVEGGSKTSPKAKKAVVKKEPGEKKPRQKKENGGGLKQSKIDFSKAKAKKSDDDVEEVTPRAERPGRRQASKKIDYSSLFSDEEEDGGNVGSDDDGNASDDDSPKRPAKRGREDESSGGAKKKAPPKKRRAVIESDDDDIEIDEDDDDDSDFNC.

ATP contacts are provided by residues Asn-72, Asn-101, 129–131, and 142–149; these read SSN and GRNGYGAK. The interval 323-325 is interaction with DNA; that stretch reads KKK. 357-359 is an ATP binding site; sequence QTK. The Toprim domain occupies 435 to 552; that stretch reads CTLILTEGDS…ELLRLPFLEE (118 aa). Mg(2+)-binding residues include Glu-441, Asp-521, and Asp-523. Positions 695–1169 constitute a Topo IIA-type catalytic domain; sequence IPSLVDGLKP…TPEMLWLDDL (475 aa). Tyr-785 functions as the O-(5'-phospho-DNA)-tyrosine intermediate in the catalytic mechanism. The segment at 972-981 is interaction with DNA; it reads KLTTTLSTNQ. Disordered regions lie at residues 1079–1110, 1183–1231, and 1246–1447; these read EDAEQADEEDEEEEEAAPSVSSKAKKEKEVDP, ERAE…DGEP, and AAAK…DFNC. The span at 1081–1094 shows a compositional bias: acidic residues; the sequence is AEQADEEDEEEEEA. The segment covering 1255 to 1281 has biased composition (basic and acidic residues); that stretch reads KEPKKPKEPKEPKVKKEPKGKQIKAEP. Residues 1283–1293 are compositionally biased toward acidic residues; sequence ASGDEVDEFDA. The residue at position 1284 (Ser-1284) is a Phosphoserine. Basic and acidic residues-rich tracts occupy residues 1310 to 1325 and 1332 to 1359; these read VKKEPGEKKPRQKKEN and SKIDFSKAKAKKSDDDVEEVTPRAERPG. Phosphoserine is present on Ser-1344. Thr-1352 is modified (phosphothreonine). Ser-1374, Ser-1385, Ser-1392, and Ser-1396 each carry phosphoserine. The segment covering 1374-1394 has biased composition (acidic residues); it reads SDEEEDGGNVGSDDDGNASDD. A compositionally biased stretch (basic and acidic residues) spans 1395-1408; that stretch reads DSPKRPAKRGREDE. The span at 1413 to 1423 shows a compositional bias: basic residues; the sequence is AKKKAPPKKRR. Positions 1427-1447 are enriched in acidic residues; the sequence is ESDDDDIEIDEDDDDDSDFNC.

This sequence belongs to the type II topoisomerase family. Homodimer. Interacts with mod(mdg4). Interacts with barr. Interacts with ph-p. Interacts with mle; the interaction mediates association with the MSL dosage compensation complex. It depends on Mg(2+) as a cofactor. Mn(2+) serves as cofactor. Ca(2+) is required as a cofactor. In terms of processing, phosphorylated. Phosphorylation by casein kinase II enhances ATPase activity.

The protein localises to the nucleus. It localises to the chromosome. It is found in the cytoplasm. It catalyses the reaction ATP-dependent breakage, passage and rejoining of double-stranded DNA.. Functionally, control of topological states of DNA by transient breakage and subsequent rejoining of DNA strands. Topoisomerase II makes double-strand breaks. Essential during mitosis and meiosis for proper segregation of daughter chromosomes. During meiosis, it disrupts heterochromatic connections between achiasmate and chiasmate homologs after spindle assembly so that chromosomes can separate at prometaphase I. During mitosis, it functions in the separation of sister chromatids by establishing amphitelic kinetochore attachments in mitotic spindles. May have a role in chromatin condensation and chromosome structure. May be involved in X-chromosome dosage compensation, perhaps by modifying the topological state of compensated genes. Regulates activity of the gypsy chromatin insulator complex by binding to mod(mdg4) and preventing its degradation. This is DNA topoisomerase 2 from Drosophila melanogaster (Fruit fly).